We begin with the raw amino-acid sequence, 677 residues long: Beta-galactosidase (677 aa).

The signal sequence occupies residues 1–23 (MPGFLVRILPLLLVLLLLGPTRG). Residues 24-28 (LRNAT) constitute a propeptide that is removed on maturation. An N-linked (GlcNAc...) asparagine glycan is attached at Asn26. Substrate-binding residues include Tyr83, Glu129, and Asn187. The active-site Proton donor is the Glu188. An intrachain disulfide couples Cys195 to Cys230. A glycan (N-linked (GlcNAc...) asparagine) is linked at Asn247. Glu268 serves as the catalytic Nucleophile. Tyr333 contacts substrate. Residues Asn464, Asn498, Asn542, Asn545, and Asn555 are each glycosylated (N-linked (GlcNAc...) asparagine). Cysteines 626 and 634 form a disulfide. A disordered region spans residues 650-677 (YDHPSKPVEKRLMPPPPQKNKDSWLDHV). Basic and acidic residues-rich tracts occupy residues 652–661 (HPSKPVEKRL) and 668–677 (KNKDSWLDHV).

The protein belongs to the glycosyl hydrolase 35 family. As to quaternary structure, homodimer. May form higher multimers. In terms of tissue distribution, detected in placenta (at protein level). Detected in fibroblasts and testis.

It is found in the lysosome. It localises to the cytoplasm. Its subcellular location is the perinuclear region. The enzyme catalyses Hydrolysis of terminal non-reducing beta-D-galactose residues in beta-D-galactosides.. Functionally, cleaves beta-linked terminal galactosyl residues from gangliosides, glycoproteins, and glycosaminoglycans. Has no beta-galactosidase catalytic activity, but plays functional roles in the formation of extracellular elastic fibers (elastogenesis) and in the development of connective tissue. Seems to be identical to the elastin-binding protein (EBP), a major component of the non-integrin cell surface receptor expressed on fibroblasts, smooth muscle cells, chondroblasts, leukocytes, and certain cancer cell types. In elastin producing cells, associates with tropoelastin intracellularly and functions as a recycling molecular chaperone which facilitates the secretions of tropoelastin and its assembly into elastic fibers. In Homo sapiens (Human), this protein is Beta-galactosidase (GLB1).